A 391-amino-acid polypeptide reads, in one-letter code: Phosphoprotein (391 aa).

3 positions are modified to phosphothreonine: Thr10, Thr16, and Thr39. Residue Ser69 is modified to Phosphoserine. Disordered regions lie at residues Ser82–Thr101 and Pro143–Val208. Thr91, Thr150, and Thr165 each carry phosphothreonine. At Ser188 the chain carries Phosphoserine. Polar residues predominate over residues Leu198–Val208. A coiled-coil region spans residues Ala218–Gln245. Thr250 is subject to Phosphothreonine. Ser257 is modified (phosphoserine). 2 positions are modified to phosphothreonine: Thr258 and Thr282. Phosphoserine is present on residues Ser292 and Ser294. Residue Thr298 is modified to Phosphothreonine. A phosphoserine mark is found at Ser301 and Ser374. The segment at Ala343 to Ile391 is interaction with the nucleoprotein. The x domain (XD) stretch occupies residues Met348–Ile391. Thr375 is subject to Phosphothreonine.

Belongs to the rubulavirus/avulavirus P protein family. In terms of assembly, homotetramer. Interacts (via multimerization domain) with polymerase L; this interaction forms the polymerase L-P complex. Interacts (via N-terminus) with N0 (via Ncore); this interaction allows P to chaperon N0 to avoid N polymerization before encapsidation. Interacts (via C-terminus) with N-RNA template; this interaction positions the polymerase on the template for both transcription and replication. Interacts with host RPS6KB1 kinase; this interaction may play a role in the viral replication and transcription.

Its subcellular location is the virion. In terms of biological role, essential cofactor of the RNA polymerase L that plays a central role in the transcription and replication by forming the polymerase complex with RNA polymerase L and recruiting L to the genomic N-RNA template for RNA synthesis. Also plays a central role in the encapsidation of nascent RNA chains by forming the encapsidation complex with the nucleocapsid protein N (N-P complex). Acts as a chaperone for newly synthesized free N protein, so-called N0, allowing encapsidation of nascent RNA chains during replication. The nucleoprotein protein N prevents excessive phosphorylation of P, which leads to down-regulation of viral transcription/ replication. Participates, together with N, in the formation of viral factories (viroplasms), which are large inclusions in the host cytoplasm where replication takes place. The sequence is that of Phosphoprotein (V/P) from Mumps orthorubulavirus (MuV).